The chain runs to 460 residues: NADH-ubiquinone oxidoreductase chain 4 (460 aa).

Transmembrane regions (helical) follow at residues 22–42 (WLWSSITTHSLLISLLSLSWF), 59–79 (IDPLSAPLLILTCWLLPLMIL), 94–113 (RIYISLLISLQVFLIMAFSA), 117–139 (ILFYIMFEATLIPTLIIITRWGN), 148–168 (TYFLFYTLIGSLPLLIALLFM), 195–215 (FWWTACLIAFLVKMPLYGVHL), 231–251 (ILAAVLLKLGGYGMMRIIIML), 258–278 (MAYPFIILAIWGIVMTSSICL), 286–306 (MIAYSSVSHMGLVAGAILIQT), 310–330 (FAGAITLMIAHGLVSSALFCL), 343–362 (LLLARGVQVILPLMATWWLL), 394–414 (ILLTGIGVLITASYSLYMFLM), and 436–456 (LLLTLHVLPVLLLILKPELIW).

It belongs to the complex I subunit 4 family.

Its subcellular location is the mitochondrion membrane. The enzyme catalyses a ubiquinone + NADH + 5 H(+)(in) = a ubiquinol + NAD(+) + 4 H(+)(out). Core subunit of the mitochondrial membrane respiratory chain NADH dehydrogenase (Complex I) that is believed to belong to the minimal assembly required for catalysis. Complex I functions in the transfer of electrons from NADH to the respiratory chain. The immediate electron acceptor for the enzyme is believed to be ubiquinone. The sequence is that of NADH-ubiquinone oxidoreductase chain 4 (MTND4) from Scyliorhinus canicula (Small-spotted catshark).